A 167-amino-acid polypeptide reads, in one-letter code: uncharacterized protein (167 aa).

The N-acetyltransferase domain maps to M1–D148.

It belongs to the acetyltransferase family.

This is an uncharacterized protein from Escherichia coli O157:H7.